Consider the following 244-residue polypeptide: Geranylgeranylglyceryl phosphate synthase (244 aa).

Mg(2+) is bound by residues Asp21 and Thr50. Sn-glycerol 1-phosphate is bound by residues 168-174, 200-201, and 222-223; these read YLEAGSG, GG, and GN.

This sequence belongs to the GGGP/HepGP synthase family. Group II subfamily. Mg(2+) is required as a cofactor.

It is found in the cytoplasm. It carries out the reaction sn-glycerol 1-phosphate + (2E,6E,10E)-geranylgeranyl diphosphate = sn-3-O-(geranylgeranyl)glycerol 1-phosphate + diphosphate. It functions in the pathway membrane lipid metabolism; glycerophospholipid metabolism. Its function is as follows. Prenyltransferase that catalyzes the transfer of the geranylgeranyl moiety of geranylgeranyl diphosphate (GGPP) to the C3 hydroxyl of sn-glycerol-1-phosphate (G1P). This reaction is the first ether-bond-formation step in the biosynthesis of archaeal membrane lipids. This Sulfurisphaera tokodaii (strain DSM 16993 / JCM 10545 / NBRC 100140 / 7) (Sulfolobus tokodaii) protein is Geranylgeranylglyceryl phosphate synthase.